Reading from the N-terminus, the 36-residue chain is Beta-amanitin proprotein (36 aa).

Positions 1-10 (MSDINATRLP) are excised as a propeptide. Positions 11 to 18 (IWGIGCDP) form a cross-link, cyclopeptide (Ile-Pro). Positions 12 to 16 (WGIGC) form a cross-link, 2'-cysteinyl-6'-hydroxytryptophan sulfoxide (Trp-Cys). Residues 19 to 36 (CIGDDVTALLTRGEASLC) constitute a propeptide that is removed on maturation.

Belongs to the MSDIN fungal toxin family. In terms of processing, processed by the macrocyclase-peptidase enzyme POPB to yield a toxic cyclic decapeptide. POPB first removes 10 residues from the N-terminus. Conformational trapping of the remaining peptide forces the enzyme to release this intermediate rather than proceed to macrocyclization. The enzyme rebinds the remaining peptide in a different conformation and catalyzes macrocyclization of the N-terminal 8 residues.

Its function is as follows. Toxin belonging to the bicyclic octapeptides amatoxins that acts by binding non-competitively to RNA polymerase II and greatly slowing the elongation of transcripts from target promoters. The polypeptide is Beta-amanitin proprotein (Amanita phalloides (Death cap)).